The following is a 1010-amino-acid chain: Regulator of telomere elongation helicase 1 homolog (1010 aa).

One can recognise a Helicase ATP-binding domain in the interval 7-333 (NGITVNFPFE…KEMLLQLEKT (327 aa)). 42–49 (SPTGTGKT) serves as a coordination point for ATP. Residues Cys-157, Cys-175, Cys-184, and Cys-220 each coordinate [4Fe-4S] cluster. The short motif at 263–266 (DEAH) is the DEAH box element. The tract at residues 912 to 931 (TSDDEDPGRTGDDPTRQAPE) is disordered. Basic and acidic residues predominate over residues 918-931 (PGRTGDDPTRQAPE).

Belongs to the helicase family. RAD3/XPD subfamily.

The protein resides in the nucleus. It carries out the reaction ATP + H2O = ADP + phosphate + H(+). A probable ATP-dependent DNA helicase implicated in DNA repair and the maintenance of genomic stability. Acts as an anti-recombinase to counteract toxic recombination and limit crossover during meiosis. Regulates meiotic recombination and crossover homeostasis by physically dissociating strand invasion events and thereby promotes noncrossover repair by meiotic synthesis dependent strand annealing (SDSA) as well as disassembly of D loop recombination intermediates. This Aedes aegypti (Yellowfever mosquito) protein is Regulator of telomere elongation helicase 1 homolog.